The sequence spans 512 residues: 2,3-bisphosphoglycerate-independent phosphoglycerate mutase (512 aa).

Mn(2+) contacts are provided by aspartate 11 and serine 61. Serine 61 (phosphoserine intermediate) is an active-site residue. Residues histidine 122, arginine 152 to aspartate 153, arginine 184, arginine 190, arginine 259 to arginine 262, and lysine 332 each bind substrate. Mn(2+) is bound by residues aspartate 399, histidine 403, aspartate 440, histidine 441, and histidine 459.

This sequence belongs to the BPG-independent phosphoglycerate mutase family. In terms of assembly, monomer. Mn(2+) is required as a cofactor.

The enzyme catalyses (2R)-2-phosphoglycerate = (2R)-3-phosphoglycerate. It participates in carbohydrate degradation; glycolysis; pyruvate from D-glyceraldehyde 3-phosphate: step 3/5. In terms of biological role, catalyzes the interconversion of 2-phosphoglycerate and 3-phosphoglycerate. This Francisella tularensis subsp. novicida (strain U112) protein is 2,3-bisphosphoglycerate-independent phosphoglycerate mutase.